A 446-amino-acid polypeptide reads, in one-letter code: Asparagine--tRNA ligase (446 aa).

The protein belongs to the class-II aminoacyl-tRNA synthetase family. Homodimer.

Its subcellular location is the cytoplasm. It carries out the reaction tRNA(Asn) + L-asparagine + ATP = L-asparaginyl-tRNA(Asn) + AMP + diphosphate + H(+). This chain is Asparagine--tRNA ligase, found in Sorangium cellulosum (strain So ce56) (Polyangium cellulosum (strain So ce56)).